Here is a 642-residue protein sequence, read N- to C-terminus: Threonine--tRNA ligase (642 aa).

A TGS domain is found at 1–61 (MPIITLPDGS…EHDASLEIIT (61 aa)). The segment at 244–535 (DHRKIGKQLD…LIEEYAGFFP (292 aa)) is catalytic. Residues Cys335, His386, and His512 each contribute to the Zn(2+) site.

It belongs to the class-II aminoacyl-tRNA synthetase family. Homodimer. Zn(2+) is required as a cofactor.

It localises to the cytoplasm. The enzyme catalyses tRNA(Thr) + L-threonine + ATP = L-threonyl-tRNA(Thr) + AMP + diphosphate + H(+). Catalyzes the attachment of threonine to tRNA(Thr) in a two-step reaction: L-threonine is first activated by ATP to form Thr-AMP and then transferred to the acceptor end of tRNA(Thr). Also edits incorrectly charged L-seryl-tRNA(Thr). The chain is Threonine--tRNA ligase from Vibrio cholerae serotype O1 (strain M66-2).